Here is a 771-residue protein sequence, read N- to C-terminus: Heat shock transcription factor (771 aa).

Residues M1 to S70 are disordered. 2 stretches are compositionally biased toward low complexity: residues P11–P23 and L31–L42. Polar residues predominate over residues N43–I62. Residues M78–P168 mediate DNA binding. The interval R183 to L266 is disordered. Low complexity-rich tracts occupy residues S189–L199 and S212–G233. Positions N238–S262 are enriched in polar residues. The interval G280–L333 is involved in trimerization. Basic and acidic residues-rich tracts occupy residues R350–A372 and T399–V415. 3 disordered regions span residues R350–A513, Q590–T634, and S708–K771. The segment covering G418–F448 has biased composition (polar residues). Composition is skewed to low complexity over residues L497–S511 and H599–A620.

Belongs to the HSF family. Homotrimer. Homotrimerization increases the affinity of HSF1 to DNA. Interacts with transcriptional coregulator SSA1 on chromatin. Post-translationally, phosphorylated at high temperature.

The protein localises to the nucleus. DNA-binding transcription factor that specifically binds heat shock promoter elements (HSE) and activates transcription. Promotes thermotolerance by transiently regulating a subset of genes. Induces expression of STI, SSA1, SSA2, HSP78 and KAR2 during the heat response. The chain is Heat shock transcription factor from Cryptococcus neoformans var. grubii serotype A (strain H99 / ATCC 208821 / CBS 10515 / FGSC 9487) (Filobasidiella neoformans var. grubii).